We begin with the raw amino-acid sequence, 92 residues long: YcgL domain-containing protein SO_2575 (92 aa).

Residues 1–85 (MLCAVYKSSR…PQVNLLAEHR (85 aa)) form the YcgL domain.

This is YcgL domain-containing protein SO_2575 from Shewanella oneidensis (strain ATCC 700550 / JCM 31522 / CIP 106686 / LMG 19005 / NCIMB 14063 / MR-1).